The chain runs to 644 residues: Probable lysophospholipase 2 (644 aa).

A signal peptide spans 1-19; that stretch reads MYFQSFYFLALLLATAVYG. Residues N44, N96, N141, N178, N221, N245, N253, N281, N286, N316, N319, N373, N393, N449, N501, N558, N579, and N596 are each glycosylated (N-linked (GlcNAc...) asparagine). In terms of domain architecture, PLA2c spans 53–600; the sequence is SCDSSEIMVN…SQYCWNGTVD (548 aa).

It belongs to the lysophospholipase family.

The protein localises to the secreted. The enzyme catalyses a 1-acyl-sn-glycero-3-phosphocholine + H2O = sn-glycerol 3-phosphocholine + a fatty acid + H(+). Its function is as follows. Catalyzes the release of fatty acids from lysophospholipids. This chain is Probable lysophospholipase 2 (plb2), found in Schizosaccharomyces pombe (strain 972 / ATCC 24843) (Fission yeast).